Here is a 290-residue protein sequence, read N- to C-terminus: Purine nucleoside phosphorylase (290 aa).

Residue 68 to 69 (RN) participates in phosphate binding. Substrate is bound at residue Met204. Thr205 contacts phosphate.

This sequence belongs to the PNP/MTAP phosphorylase family. MTAP subfamily. Homotrimer.

The protein localises to the cytoplasm. The protein resides in the nucleus. The catalysed reaction is a purine D-ribonucleoside + phosphate = a purine nucleobase + alpha-D-ribose 1-phosphate. It functions in the pathway purine metabolism; purine nucleoside salvage. Purine nucleoside phosphorylase involved in purine salvage. The sequence is that of Purine nucleoside phosphorylase from Drosophila melanogaster (Fruit fly).